The chain runs to 226 residues: Tyramine N-feruloyltransferase 10/30 (226 aa).

The segment at 29–45 (HIYKLFYQIHEYHNYTH) is important in binding site and for catalytic activity. Residues 72–222 (VLLLEVSPTP…VGDALQKYAD (151 aa)) form the N-acetyltransferase domain.

Belongs to the acetyltransferase family. As to quaternary structure, homodimer.

Its subcellular location is the cytoplasm. The enzyme catalyses tyramine + (E)-feruloyl-CoA = N-[(E)-feruloyl]tyramine + CoA + H(+). Inhibited by (2-hydroxyphenyl)amino sulfinyl acetic acid 1,1-dimethylethyl ester, by DEPC and by N-ethylmaleimide. Its function is as follows. Synthesizes amides which are involved in stress response in the cell wall. Catalyzes the synthesis of hydroxycinnamic acid amides from hydroxycinnamoyl-CoA thioesters and various hydroxyphenylethylamines such as 4-coumaroyl-CoA and sinapoyl-CoA. The protein is Tyramine N-feruloyltransferase 10/30 (THT10) of Nicotiana tabacum (Common tobacco).